The sequence spans 261 residues: RING-H2 finger protein ATL58 (261 aa).

A helical membrane pass occupies residues 25-45 (AFIFSVPICFTFIILFLFYLI). An RING-type; atypical zinc finger spans residues 100 to 142 (CSVCLGDYQPNDKLQQIPVCKHTFHMDCIDLWLTSHTTCPLCR). Disordered stretches follow at residues 149–227 (RSRQ…NDGH) and 241–261 (MEED…CRTG). Over residues 194-221 (SGVSSQPESQPVVNHRGVSSQPESQPVN) the composition is skewed to polar residues.

This sequence belongs to the RING-type zinc finger family. ATL subfamily.

It localises to the membrane. It catalyses the reaction S-ubiquitinyl-[E2 ubiquitin-conjugating enzyme]-L-cysteine + [acceptor protein]-L-lysine = [E2 ubiquitin-conjugating enzyme]-L-cysteine + N(6)-ubiquitinyl-[acceptor protein]-L-lysine.. Its pathway is protein modification; protein ubiquitination. The polypeptide is RING-H2 finger protein ATL58 (ATL58) (Arabidopsis thaliana (Mouse-ear cress)).